The primary structure comprises 218 residues: Small ribosomal subunit protein uS3c (218 aa).

The 72-residue stretch at 47–118 folds into the KH type-2 domain; sequence VQNNIRISSG…KLNIAITRIS (72 aa).

This sequence belongs to the universal ribosomal protein uS3 family. In terms of assembly, part of the 30S ribosomal subunit.

The protein localises to the plastid. Its subcellular location is the chloroplast. This is Small ribosomal subunit protein uS3c (rps3) from Draba nemorosa (Woodland whitlowgrass).